The chain runs to 295 residues: bZIP transcription factor RISBZ5 (295 aa).

The segment covering 16–26 (REEAGAGDRKP) has biased composition (basic and acidic residues). Positions 16-157 (REEAGAGDRK…ARRSRRRKQA (142 aa)) are disordered. The segment covering 109 to 119 (SDSDSDCDSLL) has biased composition (acidic residues). Positions 120 to 136 (EAERSPRLRGTKSTETK) are enriched in basic and acidic residues. In terms of domain architecture, bZIP spans 134–197 (ETKRIRRMVS…NTAVTDNRIL (64 aa)). Residues 136-155 (KRIRRMVSNRESARRSRRRK) are basic motif. The interval 162–176 (LESQVEQLKGENSSL) is leucine-zipper.

As to quaternary structure, homodimer.

The protein localises to the nucleus. Functionally, probable transcription factor that binds to the DNA specific sequence 5'-TGAGTCA-3' found in seed storage protein gene promoters. May function as a negative regulator in cold and drought stress responses. The sequence is that of bZIP transcription factor RISBZ5 from Oryza sativa subsp. japonica (Rice).